The primary structure comprises 165 residues: Cytochrome c-type biogenesis protein CcmE (165 aa).

Over 1 to 7 (MTRKQRR) the chain is Cytoplasmic. The chain crosses the membrane as a helical; Signal-anchor for type II membrane protein span at residues 8-28 (LMMIGGAGVVLVVAVGLVLNA). The Periplasmic portion of the chain corresponds to 29–165 (MRGSIVFFST…ASADAMRPAR (137 aa)). Heme is bound by residues His-122 and Tyr-126. Positions 138–149 (QGHWKDDYEKKP) are enriched in basic and acidic residues. The disordered stretch occupies residues 138–165 (QGHWKDDYEKKPPGPGAAASADAMRPAR). Low complexity predominate over residues 153 to 165 (GAAASADAMRPAR).

Belongs to the CcmE/CycJ family.

Its subcellular location is the cell inner membrane. In terms of biological role, heme chaperone required for the biogenesis of c-type cytochromes. Transiently binds heme delivered by CcmC and transfers the heme to apo-cytochromes in a process facilitated by CcmF and CcmH. This is Cytochrome c-type biogenesis protein CcmE from Rhodopseudomonas palustris (strain HaA2).